A 79-amino-acid polypeptide reads, in one-letter code: Putative transmembrane protein ORF17 (79 aa).

2 helical membrane-spanning segments follow: residues 8-28 (LMIY…IMYY) and 50-70 (VFVM…TTTI).

It localises to the host membrane. In Haloarcula hispanica (His1V), this protein is Putative transmembrane protein ORF17.